The chain runs to 515 residues: Anthranilate synthase component 1 (515 aa).

L-tryptophan-binding positions include S50 and 281 to 283 (PYM). Position 316–317 (316–317 (GT)) interacts with chorismate. E343 contacts Mg(2+). Residues Y431, R451, 465–467 (GAG), and G467 contribute to the chorismate site. E480 contacts Mg(2+).

It belongs to the anthranilate synthase component I family. In terms of assembly, heterotetramer consisting of two non-identical subunits: a beta subunit (TrpG) and a large alpha subunit (TrpE). Mg(2+) is required as a cofactor.

The enzyme catalyses chorismate + L-glutamine = anthranilate + pyruvate + L-glutamate + H(+). Its pathway is amino-acid biosynthesis; L-tryptophan biosynthesis; L-tryptophan from chorismate: step 1/5. Its activity is regulated as follows. Feedback inhibited by tryptophan. Its function is as follows. Part of a heterotetrameric complex that catalyzes the two-step biosynthesis of anthranilate, an intermediate in the biosynthesis of L-tryptophan. In the first step, the glutamine-binding beta subunit (TrpG) of anthranilate synthase (AS) provides the glutamine amidotransferase activity which generates ammonia as a substrate that, along with chorismate, is used in the second step, catalyzed by the large alpha subunit of AS (TrpE) to produce anthranilate. In the absence of TrpG, TrpE can synthesize anthranilate directly from chorismate and high concentrations of ammonia. The sequence is that of Anthranilate synthase component 1 (trpE) from Bacillus subtilis (strain 168).